We begin with the raw amino-acid sequence, 276 residues long: Undecaprenyl-diphosphatase (276 aa).

The next 8 membrane-spanning stretches (helical) occupy residues 6-26 (IEIL…WLPI), 49-69 (EMFF…MFWN), 89-109 (FSLW…GILF), 117-137 (LHTP…FIVI), 151-171 (LADI…LSLI), 181-201 (IIGA…TFFL), 224-244 (AELL…VFVI), and 256-276 (FKVF…ITAI).

The protein belongs to the UppP family.

Its subcellular location is the cell membrane. It catalyses the reaction di-trans,octa-cis-undecaprenyl diphosphate + H2O = di-trans,octa-cis-undecaprenyl phosphate + phosphate + H(+). Catalyzes the dephosphorylation of undecaprenyl diphosphate (UPP). Confers resistance to bacitracin. The protein is Undecaprenyl-diphosphatase of Enterococcus faecalis (Streptococcus faecalis).